The chain runs to 635 residues: Thrombopoietin receptor (635 aa).

An N-terminal signal peptide occupies residues 1–25 (MPSWALFMVTSCLLLAPQNLAQVSS). At 26-491 (QDVSLLASDS…RVETATETAW (466 aa)) the chain is on the extracellular side. Intrachain disulfides connect Cys40–Cys50 and Cys77–Cys93. 2 N-linked (GlcNAc...) asparagine glycosylation sites follow: Asn117 and Asn178. Residues 172 to 281 (GPRDPKNSTG…WSLPVTVDLP (110 aa)) enclose the Fibronectin type-III 1 domain. 4 disulfide bridges follow: Cys193–Cys323, Cys194–Cys241, Cys291–Cys301, and Cys334–Cys352. The tract at residues 205-232 (ALDQSPCAQPTMPWQDGPKQTSPSREAS) is disordered. An N-linked (GlcNAc...) asparagine glycan is attached at Asn298. Residue Asn358 is glycosylated (N-linked (GlcNAc...) asparagine). The region spanning 392-486 (PTPNLHWREI…WSDPTRVETA (95 aa)) is the Fibronectin type-III 2 domain. The short motif at 474–478 (WSSWS) is the WSXWS motif element. The chain crosses the membrane as a helical span at residues 492-513 (ISLVTALHLVLGLSAVLGLLLL). Residues 514–635 (RWQFPAHYRR…YLPLSYWQQP (122 aa)) are Cytoplasmic-facing. A Box 1 motif motif is present at residues 528–536 (LWPSLPDLH). Residues Lys553 and Lys573 each participate in a glycyl lysine isopeptide (Lys-Gly) (interchain with G-Cter in ubiquitin) cross-link. 3 positions are modified to phosphotyrosine: Tyr591, Tyr626, and Tyr631.

It belongs to the type I cytokine receptor family. Type 1 subfamily. In terms of assembly, homodimer. Interacts with ATXN2L. Interacts with JAK2 and TYK2; these interactions increase MPL localization to the cell membrane. Interacts with THPO. Interacts with SHIP/INPP5D. Interacts with BTK. Interacts with SYK; this interaction negatively regulates THPO-mediated ERK1/2 signaling. Post-translationally, phosphorylated at Tyr-591 in response to THPO stimulation. In terms of processing, ubiquitination at Lys-553 and Lys-573 targets MPL for degradation by both the lysosomal and proteasomal pathways. The E3 ubiquitin-protein ligase CBL significantly contributes to this ubiquitination. Expressed at a low level in a large number of cells of hematopoietic origin. Isoform 1 and isoform 2 are always found to be coexpressed.

The protein localises to the cell membrane. It localises to the golgi apparatus. It is found in the cell surface. Functionally, receptor for thrombopoietin that regulates hematopoietic stem cell renewal, megakaryocyte differentiation, and platelet formation. Upon activation by THPO, induces rapid tyrosine phosphorylation and activation of JAK2, providing docking sites for many signaling proteins such as STAT5, SHIP/INPP5D, GRB2, SOS1 and PI3K. In turn, These signaling cascades lead to the proliferation, survival, and differentiation of megakaryocytes, ultimately leading to increased platelet production. The protein is Thrombopoietin receptor (MPL) of Homo sapiens (Human).